The sequence spans 444 residues: L-cysteine:1D-myo-inositol 2-amino-2-deoxy-alpha-D-glucopyranoside ligase (444 aa).

The segment covering 1 to 13 has biased composition (basic and acidic residues); the sequence is MPCDRKTSPDQHH. Residues 1 to 21 form a disordered region; sequence MPCDRKTSPDQHHALQIHRHH. Position 75 (Cys-75) interacts with Zn(2+). L-cysteinyl-5'-AMP-binding positions include 75–78, Thr-90, and 113–115; these read CGIT and NIT. Positions 77–87 match the 'HIGH' region motif; that stretch reads ITPYDATHLGH. A 'ERGGDP' region motif is present at residues 219 to 224; it reads ERGGDP. Trp-259 contributes to the L-cysteinyl-5'-AMP binding site. Cys-263 is a Zn(2+) binding site. 281-283 lines the L-cysteinyl-5'-AMP pocket; sequence GSD. Zn(2+) is bound at residue His-288. Residue Ile-315 coordinates L-cysteinyl-5'-AMP. The short motif at 321-325 is the 'KMSKS' region element; that stretch reads KMSKS.

It belongs to the class-I aminoacyl-tRNA synthetase family. MshC subfamily. In terms of assembly, monomer. Requires Zn(2+) as cofactor.

The catalysed reaction is 1D-myo-inositol 2-amino-2-deoxy-alpha-D-glucopyranoside + L-cysteine + ATP = 1D-myo-inositol 2-(L-cysteinylamino)-2-deoxy-alpha-D-glucopyranoside + AMP + diphosphate + H(+). Its function is as follows. Catalyzes the ATP-dependent condensation of GlcN-Ins and L-cysteine to form L-Cys-GlcN-Ins. This Mycolicibacterium gilvum (strain PYR-GCK) (Mycobacterium gilvum (strain PYR-GCK)) protein is L-cysteine:1D-myo-inositol 2-amino-2-deoxy-alpha-D-glucopyranoside ligase.